The sequence spans 137 residues: Small ribosomal subunit protein uS11 (137 aa).

A disordered region spans residues 1-30 (MAQAKKGGAPKKGQKTRRREKKNVPHGAAH). Basic residues predominate over residues 8 to 21 (GAPKKGQKTRRREK).

This sequence belongs to the universal ribosomal protein uS11 family. As to quaternary structure, part of the 30S ribosomal subunit. Interacts with proteins S7 and S18. Binds to IF-3.

Its function is as follows. Located on the platform of the 30S subunit, it bridges several disparate RNA helices of the 16S rRNA. Forms part of the Shine-Dalgarno cleft in the 70S ribosome. This is Small ribosomal subunit protein uS11 from Mycolicibacterium vanbaalenii (strain DSM 7251 / JCM 13017 / BCRC 16820 / KCTC 9966 / NRRL B-24157 / PYR-1) (Mycobacterium vanbaalenii).